A 771-amino-acid chain; its full sequence is MAVAHNLGFPRIGADRELKKALEAYWKGELDEQGLRQVGRQLRARHWQAQLDAGIELLPVGDFAWYDQVLSHSLMFGVIPQRFRPAEGQATLDTLFAMARGVARSCCGGAQAQEMTKWFDTNYHYLVPEFSVDQQFQLSWTQLFEEVEEAKALGHAIKPVLIGPLSYLWLGKLKGEADQTQTFDKLELLDRLLPVYGEVLDRLAAQGVEWVQIDEPILALDLPQDWKNAFERAYNLLQRAPLKKLVATYFGGLEDNLGLAATLPVDGLHIDLVRAPEQYPVILDRLPAYKVLSLGLVNGRNVWRCDLDKALEVARHAAERLGERLWLAPSCSLLHSPVDLEREDRLDEEVKSWLAFAVQKCSEVATLARAIDDPQDAEVQAALARSRAVQAARAQSPRIHKPAVQARLAAIEAKDSRRTSVFATRIELQRARLQLPAFPTTTIGSFPQTPAIRLARQAYKQGRLSLGDYTEAMQAEIRHAVAVQEQIGLDVLVHGEAERNDMVEYFAEQLEGYVFTRFGWVQSYGSRCVKPAIIYGDLSRPRPMTVDWIRYAQQQTDRIMKGMLTGPVTMLMWSFAREDVPREVQARQLALAIRDEVCDLEAAGIRIIQIDEAAFREGLPLRREQWRHYLDWAVEAFRLCASGVRDETQIHTHMCYSEFNDVIESIAAMDADVITIETSRSQMELLEAFRAFDYPNDIGPGVYDIHSPRVPDTAEMVQLLEKAAECIPAERLWVNPDCGLKTRGWPETEAALVNMVAAARQLRAARSAKVA.

Residues 16-19 and lysine 117 each bind 5-methyltetrahydropteroyltri-L-glutamate; that span reads RELK. Residues 443–445 and glutamate 496 each bind L-homocysteine; that span reads IGS. L-methionine contacts are provided by residues 443-445 and glutamate 496; that span reads IGS. 5-methyltetrahydropteroyltri-L-glutamate is bound by residues 527-528 and tryptophan 573; that span reads RC. Residue aspartate 611 coordinates L-homocysteine. Aspartate 611 serves as a coordination point for L-methionine. Glutamate 617 is a 5-methyltetrahydropteroyltri-L-glutamate binding site. Zn(2+)-binding residues include histidine 653, cysteine 655, and glutamate 677. Histidine 706 serves as the catalytic Proton donor. Cysteine 738 contacts Zn(2+).

The protein belongs to the vitamin-B12 independent methionine synthase family. Zn(2+) is required as a cofactor.

The catalysed reaction is 5-methyltetrahydropteroyltri-L-glutamate + L-homocysteine = tetrahydropteroyltri-L-glutamate + L-methionine. Its pathway is amino-acid biosynthesis; L-methionine biosynthesis via de novo pathway; L-methionine from L-homocysteine (MetE route): step 1/1. Catalyzes the transfer of a methyl group from 5-methyltetrahydrofolate to homocysteine resulting in methionine formation. This Stutzerimonas stutzeri (strain A1501) (Pseudomonas stutzeri) protein is 5-methyltetrahydropteroyltriglutamate--homocysteine methyltransferase.